The sequence spans 130 residues: Cytochrome c oxidase subunit 13, mitochondrial (130 aa).

The N-terminal 31 residues, 1–31 (MSMMNRNIGFLSRTLKTSVPKRAGLLSFRAY), are a transit peptide targeting the mitochondrion. Topologically, residues 32-61 (SNEAKVNWLEEVQAEEEHAKRSSEFWKKVT) are mitochondrial matrix. A helical membrane pass occupies residues 62 to 80 (YYIGGPALILASANAYYIY). Residues 81 to 130 (CKHQEHAKHVEDTDPGYSFENLRFKKYPWGDGSKTLFWNDKVNHLKKDDE) are Mitochondrial intermembrane-facing.

Belongs to the cytochrome c oxidase subunit 6A family. In terms of assembly, component of the cytochrome c oxidase (complex IV, CIV), a multisubunit enzyme composed of a catalytic core of 3 subunits and several supernumerary subunits. The complex exists as a monomer or a dimer and forms supercomplexes (SCs) in the inner mitochondrial membrane with ubiquinol-cytochrome c oxidoreductase (cytochrome b-c1 complex, complex III, CIII).

Its subcellular location is the mitochondrion inner membrane. It functions in the pathway energy metabolism; oxidative phosphorylation. Its function is as follows. Component of the cytochrome c oxidase, the last enzyme in the mitochondrial electron transport chain which drives oxidative phosphorylation. The respiratory chain contains 3 multisubunit complexes succinate dehydrogenase (complex II, CII), ubiquinol-cytochrome c oxidoreductase (cytochrome b-c1 complex, complex III, CIII) and cytochrome c oxidase (complex IV, CIV), that cooperate to transfer electrons derived from NADH and succinate to molecular oxygen, creating an electrochemical gradient over the inner membrane that drives transmembrane transport and the ATP synthase. Cytochrome c oxidase is the component of the respiratory chain that catalyzes the reduction of oxygen to water. Electrons originating from reduced cytochrome c in the intermembrane space (IMS) are transferred via the dinuclear copper A center (CU(A)) of subunit 2 and heme A of subunit 1 to the active site in subunit 1, a binuclear center (BNC) formed by heme A3 and copper B (CU(B)). The BNC reduces molecular oxygen to 2 water molecules unsing 4 electrons from cytochrome c in the IMS and 4 protons from the mitochondrial matrix. The protein is Cytochrome c oxidase subunit 13, mitochondrial (cox13) of Schizosaccharomyces pombe (strain 972 / ATCC 24843) (Fission yeast).